Consider the following 863-residue polypeptide: Valine--tRNA ligase (863 aa).

Positions 43 to 53 (PYPTGSFHIGH) match the 'HIGH' region motif. Residues 517 to 521 (KMSKS) carry the 'KMSKS' region motif. Position 520 (Lys520) interacts with ATP.

It belongs to the class-I aminoacyl-tRNA synthetase family. ValS type 2 subfamily.

It localises to the cytoplasm. The enzyme catalyses tRNA(Val) + L-valine + ATP = L-valyl-tRNA(Val) + AMP + diphosphate. Functionally, catalyzes the attachment of valine to tRNA(Val). As ValRS can inadvertently accommodate and process structurally similar amino acids such as threonine, to avoid such errors, it has a 'posttransfer' editing activity that hydrolyzes mischarged Thr-tRNA(Val) in a tRNA-dependent manner. The polypeptide is Valine--tRNA ligase (Archaeoglobus fulgidus (strain ATCC 49558 / DSM 4304 / JCM 9628 / NBRC 100126 / VC-16)).